Here is a 131-residue protein sequence, read N- to C-terminus: Transcriptional activatory protein CaiF (131 aa).

Functionally, potential transcriptional activator of carnitine metabolism. The sequence is that of Transcriptional activatory protein CaiF (caiF) from Escherichia coli (strain K12).